The primary structure comprises 243 residues: 1-(5-phosphoribosyl)-5-[(5-phosphoribosylamino)methylideneamino] imidazole-4-carboxamide isomerase (243 aa).

D8 serves as the catalytic Proton acceptor. Residue D130 is the Proton donor of the active site.

Belongs to the HisA/HisF family.

It localises to the cytoplasm. It carries out the reaction 1-(5-phospho-beta-D-ribosyl)-5-[(5-phospho-beta-D-ribosylamino)methylideneamino]imidazole-4-carboxamide = 5-[(5-phospho-1-deoxy-D-ribulos-1-ylimino)methylamino]-1-(5-phospho-beta-D-ribosyl)imidazole-4-carboxamide. It participates in amino-acid biosynthesis; L-histidine biosynthesis; L-histidine from 5-phospho-alpha-D-ribose 1-diphosphate: step 4/9. The sequence is that of 1-(5-phosphoribosyl)-5-[(5-phosphoribosylamino)methylideneamino] imidazole-4-carboxamide isomerase from Methylococcus capsulatus (strain ATCC 33009 / NCIMB 11132 / Bath).